The primary structure comprises 172 residues: RNA silencing suppressor p19 (172 aa).

Residues 1 to 20 (MERVIQGNDAREQANGERWD) are compositionally biased toward basic and acidic residues. The segment at 1–37 (MERVIQGNDAREQANGERWDGGSGGTTSGFKLPDESP) is disordered.

The protein belongs to the tombusvirus protein p19 family. In terms of assembly, homodimer.

Functionally, viral suppressor of RNA silencing which binds specifically to silencing RNAs (siRNAs). Acts as a molecular caliper to specifically select siRNAs based on the length of the duplex region of the RNA. This is RNA silencing suppressor p19 from Cynara cardunculus var. scolymus (Globe artichoke).